We begin with the raw amino-acid sequence, 189 residues long: Putative zinc finger protein ORF189 (189 aa).

A C2H2-type zinc finger spans residues 114–137; sequence YVCPYCVSRFPTVRALKIHLKRRH.

This is Putative zinc finger protein ORF189 from Acidianus two-tailed virus (ATV).